An 810-amino-acid chain; its full sequence is Probable inorganic carbon transporter subunit DabA (810 aa).

Residues C347, D349, H509, and C524 each contribute to the Zn(2+) site.

Belongs to the inorganic carbon transporter (TC 9.A.2) DabA family. Forms a complex with DabB. The cofactor is Zn(2+).

The protein resides in the cell inner membrane. Its function is as follows. Part of an energy-coupled inorganic carbon pump. The chain is Probable inorganic carbon transporter subunit DabA from Marinomonas sp. (strain MWYL1).